A 240-amino-acid polypeptide reads, in one-letter code: MATLFIADLHLCVEEPAITAGFLRFLAGEARKADALYILGDLFEAWIGDDDPNPLHRQMAAAIKAVSDSGVPCYFIHGNRDFLLGKRFARESGMTLLPEEKVLELYGRRVLIMHGDTLCTDDAGYQAFRAKVHKPWLQMLFLALPLFVRKRIAARMRANSKEANSSKSLAIMDVNQNAVVSAMEKHQVQWLIHGHTHRPAVHELIANQQPAFRVVLGAWHTEGSMVKVTADDVELIHFPF.

Positions 8, 10, 41, 79, and 114 each coordinate Mn(2+). Substrate is bound at residue 79–80 (NR). Residues D122, S160, N164, K167, and H195 each contribute to the substrate site. The Mn(2+) site is built by H195 and H197.

It belongs to the LpxH family. Mn(2+) is required as a cofactor.

It localises to the cell inner membrane. The enzyme catalyses UDP-2-N,3-O-bis[(3R)-3-hydroxytetradecanoyl]-alpha-D-glucosamine + H2O = 2-N,3-O-bis[(3R)-3-hydroxytetradecanoyl]-alpha-D-glucosaminyl 1-phosphate + UMP + 2 H(+). Its pathway is glycolipid biosynthesis; lipid IV(A) biosynthesis; lipid IV(A) from (3R)-3-hydroxytetradecanoyl-[acyl-carrier-protein] and UDP-N-acetyl-alpha-D-glucosamine: step 4/6. Hydrolyzes the pyrophosphate bond of UDP-2,3-diacylglucosamine to yield 2,3-diacylglucosamine 1-phosphate (lipid X) and UMP by catalyzing the attack of water at the alpha-P atom. Involved in the biosynthesis of lipid A, a phosphorylated glycolipid that anchors the lipopolysaccharide to the outer membrane of the cell. In Shigella boydii serotype 18 (strain CDC 3083-94 / BS512), this protein is UDP-2,3-diacylglucosamine hydrolase.